The primary structure comprises 147 residues: Large ribosomal subunit protein uL15 (147 aa).

A disordered region spans residues 1–57 (MDLSNLSPAPGSTKARKRLGRGPGSGNGTTAGRGNKGHNSRSGGGVRPGFEGGQMPL). Composition is skewed to gly residues over residues 21-31 (RGPGSGNGTTA) and 42-52 (SGGGVRPGFEG).

This sequence belongs to the universal ribosomal protein uL15 family. Part of the 50S ribosomal subunit.

Functionally, binds to the 23S rRNA. The chain is Large ribosomal subunit protein uL15 from Desulfosudis oleivorans (strain DSM 6200 / JCM 39069 / Hxd3) (Desulfococcus oleovorans).